We begin with the raw amino-acid sequence, 176 residues long: Sec-independent protein translocase protein TatB (176 aa).

A helical membrane pass occupies residues 1–21 (MLDLGLSKMALIGVVALVVLG). The disordered stretch occupies residues 155-176 (QSGAARVARHQPASLRRPTRFL).

Belongs to the TatB family. In terms of assembly, the Tat system comprises two distinct complexes: a TatABC complex, containing multiple copies of TatA, TatB and TatC subunits, and a separate TatA complex, containing only TatA subunits. Substrates initially bind to the TatABC complex, which probably triggers association of the separate TatA complex to form the active translocon.

The protein localises to the cell inner membrane. Functionally, part of the twin-arginine translocation (Tat) system that transports large folded proteins containing a characteristic twin-arginine motif in their signal peptide across membranes. Together with TatC, TatB is part of a receptor directly interacting with Tat signal peptides. TatB may form an oligomeric binding site that transiently accommodates folded Tat precursor proteins before their translocation. The protein is Sec-independent protein translocase protein TatB of Burkholderia ambifaria (strain ATCC BAA-244 / DSM 16087 / CCUG 44356 / LMG 19182 / AMMD) (Burkholderia cepacia (strain AMMD)).